The following is a 140-amino-acid chain: Histone H3-like protein (140 aa).

The tract at residues 1–36 (MSRTKQTASKALGGKAPRKGISAKSIPSSGCSPAMP) is disordered. N6,N6,N6-trimethyllysine; alternate is present on Lys-5. Lys-5 carries the N6,N6-dimethyllysine; alternate modification. Lys-5 and Lys-10 each carry N6-methyllysine; alternate. Lys-10, Lys-15, Lys-19, and Lys-24 each carry N6-acetyllysine; alternate. An N6,N6-dimethyllysine; alternate modification is found at Lys-15. Residues Lys-19 and Lys-24 each carry the N6-methyllysine; alternate modification. Residues Lys-56 and Lys-64 each carry the N6-acetyllysine modification.

It belongs to the histone H3 family. The nucleosome is a histone octamer containing two molecules each of H2A, H2B, H3 and H4 assembled in one H3-H4 heterotetramer and two H2A-H2B heterodimers. The octamer wraps approximately 147 bp of DNA. Post-translationally, mono-, di- and trimethylated to form H3K4me1/2/3. H3K4me activates gene expression by regulating transcription elongation and plays a role in telomere length maintenance. H3K4me enrichment correlates with transcription levels, and occurs in a 5' to 3' gradient with H3K4me3 enrichment at the 5'-end of genes, shifting to H3K4me2 and then H3K4me1. In terms of processing, acetylation of histone H3 leads to transcriptional activation.

The protein localises to the nucleus. The protein resides in the chromosome. Its function is as follows. Core component of nucleosome. Nucleosomes wrap and compact DNA into chromatin, limiting DNA accessibility to the cellular machineries which require DNA as a template. Histones thereby play a central role in transcription regulation, DNA repair, DNA replication and chromosomal stability. DNA accessibility is regulated via a complex set of post-translational modifications of histones, also called histone code, and nucleosome remodeling. The chain is Histone H3-like protein from Encephalitozoon cuniculi (strain GB-M1) (Microsporidian parasite).